We begin with the raw amino-acid sequence, 31 residues long: MFTLLSYFAFLMLALTFTLALFVGLNKIQIL.

The chain crosses the membrane as a helical span at residues 4–24 (LLSYFAFLMLALTFTLALFVG).

This sequence belongs to the PetL family. The 4 large subunits of the cytochrome b6-f complex are cytochrome b6, subunit IV (17 kDa polypeptide, PetD), cytochrome f and the Rieske protein, while the 4 small subunits are PetG, PetL, PetM and PetN. The complex functions as a dimer.

It localises to the plastid. The protein localises to the chloroplast thylakoid membrane. In terms of biological role, component of the cytochrome b6-f complex, which mediates electron transfer between photosystem II (PSII) and photosystem I (PSI), cyclic electron flow around PSI, and state transitions. PetL is important for photoautotrophic growth as well as for electron transfer efficiency and stability of the cytochrome b6-f complex. The sequence is that of Cytochrome b6-f complex subunit 6 from Adiantum capillus-veneris (Maidenhair fern).